A 293-amino-acid chain; its full sequence is Elongation factor Ts (293 aa).

An involved in Mg(2+) ion dislocation from EF-Tu region spans residues 80-83; it reads TDFV.

Belongs to the EF-Ts family.

The protein resides in the cytoplasm. Its function is as follows. Associates with the EF-Tu.GDP complex and induces the exchange of GDP to GTP. It remains bound to the aminoacyl-tRNA.EF-Tu.GTP complex up to the GTP hydrolysis stage on the ribosome. This is Elongation factor Ts from Burkholderia vietnamiensis (strain G4 / LMG 22486) (Burkholderia cepacia (strain R1808)).